The sequence spans 122 residues: Heat-labile enterotoxin IIB, B chain (122 aa).

Positions 1-23 (MSFKKIIKAFVIMAALVSVQAHA) are cleaved as a signal peptide. A disulfide bridge connects residues cysteine 33 and cysteine 104.

Heterohexamer of one A chain and of five B chains.

Its function is as follows. The biological activity of the toxin is produced by the A chain, which activates intracellular adenyl cyclase. The polypeptide is Heat-labile enterotoxin IIB, B chain (Escherichia coli).